Here is a 90-residue protein sequence, read N- to C-terminus: Signal recognition particle 19 kDa protein (90 aa).

It belongs to the SRP19 family. As to quaternary structure, part of the signal recognition particle protein translocation system, which is composed of SRP and FtsY. Archaeal SRP consists of a 7S RNA molecule of 300 nucleotides and two protein subunits: SRP54 and SRP19.

It localises to the cytoplasm. Its function is as follows. Involved in targeting and insertion of nascent membrane proteins into the cytoplasmic membrane. Binds directly to 7S RNA and mediates binding of the 54 kDa subunit of the SRP. This chain is Signal recognition particle 19 kDa protein, found in Methanococcus aeolicus (strain ATCC BAA-1280 / DSM 17508 / OCM 812 / Nankai-3).